Here is a 214-residue protein sequence, read N- to C-terminus: Glycine-rich protein 2 (214 aa).

The 68-residue stretch at 8-75 folds into the CSD domain; sequence RAKGTVKWFS…RTKAVDVTGP (68 aa). Residues 54–91 are disordered; that stretch reads TVEFEVESGGDGRTKAVDVTGPDGAAVQGGRGGGGGGG. Residues 80-91 are compositionally biased toward gly residues; sequence VQGGRGGGGGGG. 2 consecutive CCHC-type zinc fingers follow at residues 157–174 and 194–211; these read SGCF…DCSQ and GGCY…ECTS.

This chain is Glycine-rich protein 2 (GRP-2), found in Nicotiana sylvestris (Wood tobacco).